Consider the following 745-residue polypeptide: MFNEITKSVMWNGQVLEISTGKIARQANAAVTVKMGNSILLCTCVVANKVKDGIGFFPLTINYREMAYSAGKIPGGFFKREGKASDREILVSRLIDRPIRPLFHQAFMHETHVTCSVLSYDPATPVDILAIIGASAALSISPAPYLEIVAASKVGLINGEFVLNPTLELLKTSQLDLVVAGTEDSVMMVESEAHLLSEDKMLEAVKFGFESFQTVIKLIKELAKEAKKPKFEMQDLYPSSLKKEIEKLFTKEVEQAFEIKSKQERSTDLALIYEKVLTHFVRDIENKKYNNYQIESALKAISADILRNKILEKNIRIDGRSTTDIRQIACEVGLLPSAHGSALFTRGETQSLVSTTFGTSLDEQIVDSLEGEYKERFMLNYIFPPYSVNEAMPMKAPSRREVGHGKLAWRAINPILPNKVQFPYSIRVVAETTESNGSSSMATVCGSSLALMHAGVPIKAPVAGIAMGLVKESNKFAVLSDIIGDEDYFGDMDFKVAGTSSGITALQMDIKISGIDFKIIQIALEQARLGRLHILEQMNKVISKPNSELSKNAPSSTTVKIDKDKIKDIIGPGGKIIKEICETSNAKIDISDDGTVSIYASDRDKIKIALDKIKAIAVEPEIGEIFNGTVMKVLDSGAFINYLGNKDGFVHISEISDARIDKVSSVLKQGDIVKVKLIGFDNKGKAKLTIKNAYKDHSSNNTKQKNNVKDDSESEQRRDTSKKRTWNEDNNTEMSEVITERKYFT.

2 residues coordinate Mg(2+): Asp487 and Asp493. The KH domain occupies 554-613 (PSSTTVKIDKDKIKDIIGPGGKIIKEICETSNAKIDISDDGTVSIYASDRDKIKIALDKI). The 69-residue stretch at 623-691 (GEIFNGTVMK…NKGKAKLTIK (69 aa)) folds into the S1 motif domain. The tract at residues 693-732 (AYKDHSSNNTKQKNNVKDDSESEQRRDTSKKRTWNEDNNT) is disordered. Residues 707-719 (NVKDDSESEQRRD) show a composition bias toward basic and acidic residues.

Belongs to the polyribonucleotide nucleotidyltransferase family. Mg(2+) serves as cofactor.

The protein resides in the cytoplasm. The catalysed reaction is RNA(n+1) + phosphate = RNA(n) + a ribonucleoside 5'-diphosphate. In terms of biological role, involved in mRNA degradation. Catalyzes the phosphorolysis of single-stranded polyribonucleotides processively in the 3'- to 5'-direction. The protein is Polyribonucleotide nucleotidyltransferase of Rickettsia prowazekii (strain Madrid E).